Here is a 69-residue protein sequence, read N- to C-terminus: U2-agatoxin-Ao1o (69 aa).

The N-terminal stretch at 1-20 is a signal peptide; that stretch reads MKAIISLLLISAMVFSMFEA. Positions 21–34 are excised as a propeptide; that stretch reads VPVRRRFTAFEGER. 3 cysteine pairs are disulfide-bonded: Cys-36/Cys-52, Cys-43/Cys-57, and Cys-51/Cys-67. Leu-68 is subject to Leucine amide.

The protein belongs to the neurotoxin 01 (U2-agtx) family. In terms of tissue distribution, expressed by the venom gland.

Its subcellular location is the secreted. Its function is as follows. Insect active toxin causing rapid but reversible paralysis in crickets. No activity shown in mammals. Does not show effect on mammalian voltage-gated calcium channels. This Agelena orientalis (Funnel-web spider) protein is U2-agatoxin-Ao1o.